Here is a 635-residue protein sequence, read N- to C-terminus: BTB/POZ domain-containing protein SETH6 (635 aa).

A BTB domain is found at 39–104 (SDLTIEVGSA…CYGVGVQYNS (66 aa)). The NPH3 domain maps to 206 to 494 (DWWGRSLPIL…VQVLFYEQTR (289 aa)). Phosphotyrosine is present on Tyr435. The disordered stretch occupies residues 604–635 (QSVASSGKKHTEEKTNSERRFMFQKRRCHSVS). The segment covering 612-624 (KHTEEKTNSERRF) has biased composition (basic and acidic residues). Over residues 625-635 (MFQKRRCHSVS) the composition is skewed to basic residues.

This sequence belongs to the NPH3 family.

The protein operates within protein modification; protein ubiquitination. May act as a substrate-specific adapter of an E3 ubiquitin-protein ligase complex (CUL3-RBX1-BTB) which mediates the ubiquitination and subsequent proteasomal degradation of target proteins. This is BTB/POZ domain-containing protein SETH6 (SETH6) from Arabidopsis thaliana (Mouse-ear cress).